The following is a 413-amino-acid chain: Imidazolonepropionase (413 aa).

H79 and H81 together coordinate Fe(3+). Zn(2+) contacts are provided by H79 and H81. 4-imidazolone-5-propanoate-binding residues include R88, Y151, and H184. Residue Y151 coordinates N-formimidoyl-L-glutamate. H248 serves as a coordination point for Fe(3+). H248 is a Zn(2+) binding site. E251 lines the 4-imidazolone-5-propanoate pocket. Position 322 (D322) interacts with Fe(3+). A Zn(2+)-binding site is contributed by D322. The N-formimidoyl-L-glutamate site is built by N324 and G326. S327 lines the 4-imidazolone-5-propanoate pocket.

Belongs to the metallo-dependent hydrolases superfamily. HutI family. Zn(2+) serves as cofactor. Requires Fe(3+) as cofactor.

Its subcellular location is the cytoplasm. It catalyses the reaction 4-imidazolone-5-propanoate + H2O = N-formimidoyl-L-glutamate. It functions in the pathway amino-acid degradation; L-histidine degradation into L-glutamate; N-formimidoyl-L-glutamate from L-histidine: step 3/3. In terms of biological role, catalyzes the hydrolytic cleavage of the carbon-nitrogen bond in imidazolone-5-propanoate to yield N-formimidoyl-L-glutamate. It is the third step in the universal histidine degradation pathway. The sequence is that of Imidazolonepropionase from Fusobacterium nucleatum subsp. nucleatum (strain ATCC 25586 / DSM 15643 / BCRC 10681 / CIP 101130 / JCM 8532 / KCTC 2640 / LMG 13131 / VPI 4355).